A 132-amino-acid chain; its full sequence is Peptide methionine sulfoxide reductase MsrB (132 aa).

The region spanning 9-131 is the MsrB domain; sequence DAQWRAELSP…NSASLSFHPK (123 aa). The Zn(2+) site is built by Cys-48, Cys-51, Cys-97, and Cys-100. Catalysis depends on Cys-120, which acts as the Nucleophile.

This sequence belongs to the MsrB Met sulfoxide reductase family. Requires Zn(2+) as cofactor.

It catalyses the reaction L-methionyl-[protein] + [thioredoxin]-disulfide + H2O = L-methionyl-(R)-S-oxide-[protein] + [thioredoxin]-dithiol. The polypeptide is Peptide methionine sulfoxide reductase MsrB (Thiobacillus denitrificans (strain ATCC 25259 / T1)).